Reading from the N-terminus, the 262-residue chain is 3-methyl-2-oxobutanoate hydroxymethyltransferase (262 aa).

Mg(2+) contacts are provided by aspartate 44 and aspartate 83. 3-methyl-2-oxobutanoate-binding positions include 44 to 45 (DS), aspartate 83, and lysine 111. Glutamate 113 contributes to the Mg(2+) binding site. Catalysis depends on glutamate 180, which acts as the Proton acceptor.

Belongs to the PanB family. Homodecamer; pentamer of dimers. It depends on Mg(2+) as a cofactor.

Its subcellular location is the cytoplasm. It catalyses the reaction 3-methyl-2-oxobutanoate + (6R)-5,10-methylene-5,6,7,8-tetrahydrofolate + H2O = 2-dehydropantoate + (6S)-5,6,7,8-tetrahydrofolate. Its pathway is cofactor biosynthesis; (R)-pantothenate biosynthesis; (R)-pantoate from 3-methyl-2-oxobutanoate: step 1/2. Functionally, catalyzes the reversible reaction in which hydroxymethyl group from 5,10-methylenetetrahydrofolate is transferred onto alpha-ketoisovalerate to form ketopantoate. The sequence is that of 3-methyl-2-oxobutanoate hydroxymethyltransferase from Alcanivorax borkumensis (strain ATCC 700651 / DSM 11573 / NCIMB 13689 / SK2).